The primary structure comprises 106 residues: Putative membrane protein insertion efficiency factor (106 aa).

Belongs to the UPF0161 family.

It localises to the cell inner membrane. Could be involved in insertion of integral membrane proteins into the membrane. The chain is Putative membrane protein insertion efficiency factor from Methylacidiphilum infernorum (isolate V4) (Methylokorus infernorum (strain V4)).